The primary structure comprises 180 residues: MKIINIIKGVGTQLRSLGMVFSHAWSPRETLNYPEQAVYAAPRYRGRIVLTRDPDGDERCVACNLCAVACPVGCISLQKSEREDGRWYPEFFRINFSRCIFCGLCEEACPTTAIQLTPDFEMGEYRRQDLVYEKEDLLISGPGKYPDYNFYRMSGMAIDGKPKGDAENEAKPIDVKSLLP.

2 consecutive 4Fe-4S ferredoxin-type domains span residues 48–80 (IVLT…LQKS) and 90–119 (EFFR…LTPD). Residues cysteine 60, cysteine 63, cysteine 66, cysteine 70, cysteine 99, cysteine 102, cysteine 105, and cysteine 109 each contribute to the [4Fe-4S] cluster site. The span at 161-174 (KPKGDAENEAKPID) shows a compositional bias: basic and acidic residues. Positions 161–180 (KPKGDAENEAKPIDVKSLLP) are disordered.

It belongs to the complex I 23 kDa subunit family. As to quaternary structure, NDH-1 is composed of 14 different subunits. Subunits NuoA, H, J, K, L, M, N constitute the membrane sector of the complex. It depends on [4Fe-4S] cluster as a cofactor.

Its subcellular location is the cell inner membrane. It catalyses the reaction a quinone + NADH + 5 H(+)(in) = a quinol + NAD(+) + 4 H(+)(out). NDH-1 shuttles electrons from NADH, via FMN and iron-sulfur (Fe-S) centers, to quinones in the respiratory chain. The immediate electron acceptor for the enzyme in this species is believed to be ubiquinone. Couples the redox reaction to proton translocation (for every two electrons transferred, four hydrogen ions are translocated across the cytoplasmic membrane), and thus conserves the redox energy in a proton gradient. This chain is NADH-quinone oxidoreductase subunit I, found in Aeromonas hydrophila subsp. hydrophila (strain ATCC 7966 / DSM 30187 / BCRC 13018 / CCUG 14551 / JCM 1027 / KCTC 2358 / NCIMB 9240 / NCTC 8049).